We begin with the raw amino-acid sequence, 398 residues long: Acetate kinase (398 aa).

Asn10 contacts Mg(2+). Residue Lys17 participates in ATP binding. Arg89 contributes to the substrate binding site. Catalysis depends on Asp148, which acts as the Proton donor/acceptor. Residues 208–212, 283–285, and 331–335 contribute to the ATP site; these read HLGNG, DCR, and GIGEN. Glu385 is a binding site for Mg(2+).

The protein belongs to the acetokinase family. In terms of assembly, homodimer. The cofactor is Mg(2+). Requires Mn(2+) as cofactor.

The protein resides in the cytoplasm. It catalyses the reaction acetate + ATP = acetyl phosphate + ADP. Its pathway is metabolic intermediate biosynthesis; acetyl-CoA biosynthesis; acetyl-CoA from acetate: step 1/2. In terms of biological role, catalyzes the formation of acetyl phosphate from acetate and ATP. Can also catalyze the reverse reaction. The polypeptide is Acetate kinase (Histophilus somni (strain 129Pt) (Haemophilus somnus)).